The primary structure comprises 360 residues: Pyrimidine monooxygenase RutA (360 aa).

FMN is bound by residues Ile49–Lys50, Asn115, Glu124, Arg140–Tyr141, and Ser190.

This sequence belongs to the NtaA/SnaA/DszA monooxygenase family. RutA subfamily.

It catalyses the reaction uracil + FMNH2 + NADH + O2 = (Z)-3-ureidoacrylate + FMN + NAD(+) + H2O + H(+). The enzyme catalyses thymine + FMNH2 + NADH + O2 = (Z)-2-methylureidoacrylate + FMN + NAD(+) + H2O + H(+). Catalyzes the pyrimidine ring opening between N-3 and C-4 by an unusual flavin hydroperoxide-catalyzed mechanism, adding oxygen atoms in the process to yield ureidoacrylate peracid, that immediately reacts with FMN forming ureidoacrylate and FMN-N(5)-oxide. The FMN-N(5)-oxide reacts spontaneously with NADH to produce FMN. Requires the flavin reductase RutF to regenerate FMN in vivo. This chain is Pyrimidine monooxygenase RutA, found in Bradyrhizobium sp. (strain BTAi1 / ATCC BAA-1182).